Reading from the N-terminus, the 1338-residue chain is Nonribosomal peptide synthetase astA (1338 aa).

The tract at residues 22 to 52 is disordered; it reads IAVVSGDIPSPHPKNEPSQTSTLHIPRDSDL. The tract at residues 271-681 is adenylation; it reads FQARCRQNPS…GRKGAEVKLR (411 aa). Residues 820–893 enclose the Carrier domain; the sequence is TPVEIIIHDA…SLAEKCSAGG (74 aa). Serine 854 is subject to O-(pantetheine 4'-phosphoryl)serine. The tract at residues 949–1336 is condensation; the sequence is TFIFRLSGPV…IIRFLDSPDS (388 aa).

This sequence belongs to the NRP synthetase family.

It catalyses the reaction 7beta,14,16-trihydroxyconfertifolin + benzoate + H(+) = dideacetyl astellolide A + H2O. The enzyme catalyses 7beta,14,16-trihydroxyconfertifolin + 4-hydroxybenzoate + H(+) = dideacetyl astellolide B + H2O. The protein operates within secondary metabolite biosynthesis; terpenoid biosynthesis. In terms of biological role, nonribosomal peptide synthetase; part of the gene cluster that mediates the biosynthesis of astellolides, drimane-type sesquiterpene esters that show antimicrobial, anti-inflammatory, and anti-tumor activities. The first step in astellolide biosynthesis is performed by the sesquiterpene cyclase astC that catalyzes the formation of drimanyl pyrophosphate from farnesyl pyrophosphate. Drimanyl pyrophosphate is then dephosphorylated by the sesquiterpene phosphatase astI to produce drimanyl monophosphate which is further dephosphorylated to drim-8-ene-11-ol by atsK. Drim-8-ene-11-ol is converted to confertifolin, probably by the cytochrome P450 monooxygenase astD and/or the dehydrogenase astE. The cytochrome P450 monooxygenases astB, astF and astJ then hydroxylate confertifolin at C6, C14, or C15 to form trihydroxy confertifolin. The nonribosomal peptide synthetase astA catalyzes ester bond formation between trihydroxy contifolin and benzoic acid (BA) or 4-hydroxy benzoic acid (4HBA), leading to the formation of dideacetyl astellolides A and B, respectively. Finally, the O-acetyltransferase astG converts dideacetyl astellolides A and B into deacetyl astellolides A and B. This chain is Nonribosomal peptide synthetase astA, found in Aspergillus oryzae (strain ATCC 42149 / RIB 40) (Yellow koji mold).